The chain runs to 172 residues: RNA silencing suppressor p19 (172 aa).

Over residues 1–15 (MERAIQGNDAREQAY) the composition is skewed to basic and acidic residues. The interval 1–38 (MERAIQGNDAREQAYGERWNGGPGGSTSPFQLPDESPS) is disordered.

The protein belongs to the tombusvirus protein p19 family. As to quaternary structure, homodimer.

Functionally, viral suppressor of RNA silencing which binds specifically to silencing RNAs (siRNAs). Acts as a molecular caliper to specifically select siRNAs based on the length of the duplex region of the RNA. The polypeptide is RNA silencing suppressor p19 (Tomato bushy stunt virus (strain A23) (TBSV)).